The sequence spans 36 residues: Pollen allergen Dac g 2 (36 aa).

The protein belongs to the expansin family. Expansin B subfamily.

Its subcellular location is the secreted. The sequence is that of Pollen allergen Dac g 2 from Dactylis glomerata (Orchard grass).